A 267-amino-acid chain; its full sequence is Phosphate import ATP-binding protein PstB (267 aa).

In terms of domain architecture, ABC transporter spans 21-262 (IAIRNLEFYY…PSKQQTEDYI (242 aa)). An ATP-binding site is contributed by 53 to 60 (GPSGCGKS).

Belongs to the ABC transporter superfamily. Phosphate importer (TC 3.A.1.7) family. As to quaternary structure, the complex is composed of two ATP-binding proteins (PstB), two transmembrane proteins (PstC and PstA) and a solute-binding protein (PstS).

It is found in the cell inner membrane. It catalyses the reaction phosphate(out) + ATP + H2O = ADP + 2 phosphate(in) + H(+). In terms of biological role, part of the ABC transporter complex PstSACB involved in phosphate import. Responsible for energy coupling to the transport system. The chain is Phosphate import ATP-binding protein PstB from Xylella fastidiosa (strain 9a5c).